Consider the following 335-residue polypeptide: Thioredoxin-related transmembrane protein 4 (335 aa).

The signal sequence occupies residues 1 to 20 (MTGGFCVPVLLAAWLAAAAA). Positions 26 to 133 (AALPAEESRV…YEDLQNYILE (108 aa)) constitute a Thioredoxin domain. Active-site nucleophile residues include cysteine 60 and cysteine 63. Cysteine 60 and cysteine 63 are oxidised to a cystine. A helical transmembrane segment spans residues 186 to 206 (VFFVIATLVFGLFMGLILVVI). Residues 222–316 (CEQEQSTGEA…EDGAHPADTQ (95 aa)) form a disordered region. Positions 238-280 (QDAEEEKDDSNEEENKDSLVDDEEEKEDIGDEDEGEEDEEEDN) are enriched in acidic residues. 2 positions are modified to phosphoserine: serine 247 and serine 255. The segment covering 286 to 298 (AEERSDTNERAVV) has biased composition (basic and acidic residues).

Its subcellular location is the nucleus inner membrane. It is found in the endoplasmic reticulum membrane. This chain is Thioredoxin-related transmembrane protein 4 (Tmx4), found in Mus musculus (Mouse).